The chain runs to 58 residues: UPF0391 membrane protein Patl_4137 (58 aa).

2 helical membrane-spanning segments follow: residues 4-24 (WALTFLIIAILAGVMGFGGIA) and 27-47 (AAGIAKIIFFVFLVLLVLSLV).

The protein belongs to the UPF0391 family.

Its subcellular location is the cell membrane. The protein is UPF0391 membrane protein Patl_4137 of Pseudoalteromonas atlantica (strain T6c / ATCC BAA-1087).